The sequence spans 168 residues: Cytochrome c-type biogenesis protein CcmE (168 aa).

Over 1-7 (MTRKQRR) the chain is Cytoplasmic. The chain crosses the membrane as a helical; Signal-anchor for type II membrane protein span at residues 8 to 28 (LMLIGVCGAVLAVALGLVLWA). Residues 29-168 (MRGTIVFFRS…SGEKPALRQQ (140 aa)) are Periplasmic-facing. Positions 122 and 126 each coordinate heme. Residues 134-168 (ALKKQGHWQGEAKHPGGTAPAPQTASGEKPALRQQ) form a disordered region.

It belongs to the CcmE/CycJ family.

It localises to the cell inner membrane. Functionally, heme chaperone required for the biogenesis of c-type cytochromes. Transiently binds heme delivered by CcmC and transfers the heme to apo-cytochromes in a process facilitated by CcmF and CcmH. In Methylobacterium nodulans (strain LMG 21967 / CNCM I-2342 / ORS 2060), this protein is Cytochrome c-type biogenesis protein CcmE.